Here is a 306-residue protein sequence, read N- to C-terminus: Mitochondrial uncoupling protein 1 (306 aa).

3 Solcar repeats span residues 9–102 (LSLP…VKNL), 112–203 (VPLS…VKET), and 212–296 (DNVV…AKKY). 6 consecutive transmembrane segments (helical) span residues 15-35 (FACS…LDTA), 71-91 (LRSL…FGGL), 118-138 (ILAG…TDLV), 177-197 (TGLG…LASY), 218-238 (ILSG…VDVV), and 269-289 (YKGF…MFLT).

This sequence belongs to the mitochondrial carrier (TC 2.A.29) family. As to expression, widely expressed.

It localises to the mitochondrion inner membrane. In terms of biological role, PUMPS are mitochondrial transporter proteins that create proton leaks across the inner mitochondrial membrane, thus uncoupling oxidative phosphorylation. This leads to a decrease in the efficiency of oxidative phosphorylation and an increase in heat production. Is involved in protecting plant cells against oxidative stress damage and maintaining the redox balance of the mitochondrial electron transport chain to facilitate photosynthetic metabolism. May play a regulatory role during photorespiration. In Arabidopsis thaliana (Mouse-ear cress), this protein is Mitochondrial uncoupling protein 1 (PUMP1).